The following is a 334-amino-acid chain: Holliday junction branch migration complex subunit RuvB (334 aa).

The segment at 4–184 (ADRLISAEPI…FGIVQRLEFY (181 aa)) is large ATPase domain (RuvB-L). Residues Ile23, Arg24, Gly65, Lys68, Thr69, Thr70, 131–133 (EDY), Arg174, Tyr184, and Arg221 each bind ATP. Thr69 is a binding site for Mg(2+). The segment at 185–255 (QVADLQHIVS…VAMQALDMLN (71 aa)) is small ATPAse domain (RuvB-S). Positions 258–334 (AEGFDYMDRK…YKHFGMVREE (77 aa)) are head domain (RuvB-H). Residues Arg294, Arg313, and Arg318 each contribute to the DNA site.

This sequence belongs to the RuvB family. In terms of assembly, homohexamer. Forms an RuvA(8)-RuvB(12)-Holliday junction (HJ) complex. HJ DNA is sandwiched between 2 RuvA tetramers; dsDNA enters through RuvA and exits via RuvB. An RuvB hexamer assembles on each DNA strand where it exits the tetramer. Each RuvB hexamer is contacted by two RuvA subunits (via domain III) on 2 adjacent RuvB subunits; this complex drives branch migration. In the full resolvosome a probable DNA-RuvA(4)-RuvB(12)-RuvC(2) complex forms which resolves the HJ.

It is found in the cytoplasm. The enzyme catalyses ATP + H2O = ADP + phosphate + H(+). Functionally, the RuvA-RuvB-RuvC complex processes Holliday junction (HJ) DNA during genetic recombination and DNA repair, while the RuvA-RuvB complex plays an important role in the rescue of blocked DNA replication forks via replication fork reversal (RFR). RuvA specifically binds to HJ cruciform DNA, conferring on it an open structure. The RuvB hexamer acts as an ATP-dependent pump, pulling dsDNA into and through the RuvAB complex. RuvB forms 2 homohexamers on either side of HJ DNA bound by 1 or 2 RuvA tetramers; 4 subunits per hexamer contact DNA at a time. Coordinated motions by a converter formed by DNA-disengaged RuvB subunits stimulates ATP hydrolysis and nucleotide exchange. Immobilization of the converter enables RuvB to convert the ATP-contained energy into a lever motion, pulling 2 nucleotides of DNA out of the RuvA tetramer per ATP hydrolyzed, thus driving DNA branch migration. The RuvB motors rotate together with the DNA substrate, which together with the progressing nucleotide cycle form the mechanistic basis for DNA recombination by continuous HJ branch migration. Branch migration allows RuvC to scan DNA until it finds its consensus sequence, where it cleaves and resolves cruciform DNA. This chain is Holliday junction branch migration complex subunit RuvB, found in Serratia proteamaculans (strain 568).